Here is a 210-residue protein sequence, read N- to C-terminus: Large ribosomal subunit protein uL3 (210 aa).

Belongs to the universal ribosomal protein uL3 family. As to quaternary structure, part of the 50S ribosomal subunit. Forms a cluster with proteins L14 and L19.

Its function is as follows. One of the primary rRNA binding proteins, it binds directly near the 3'-end of the 23S rRNA, where it nucleates assembly of the 50S subunit. This is Large ribosomal subunit protein uL3 from Caldicellulosiruptor saccharolyticus (strain ATCC 43494 / DSM 8903 / Tp8T 6331).